The chain runs to 207 residues: Ribosomal RNA large subunit methyltransferase E (207 aa).

The segment at 1 to 20 (MKRDPTKGRKTPDHYARKAK) is disordered. S-adenosyl-L-methionine is bound by residues G56, W58, D76, D94, and D116. The active-site Proton acceptor is K156.

The protein belongs to the class I-like SAM-binding methyltransferase superfamily. RNA methyltransferase RlmE family.

It is found in the cytoplasm. The enzyme catalyses uridine(2552) in 23S rRNA + S-adenosyl-L-methionine = 2'-O-methyluridine(2552) in 23S rRNA + S-adenosyl-L-homocysteine + H(+). In terms of biological role, specifically methylates the uridine in position 2552 of 23S rRNA at the 2'-O position of the ribose in the fully assembled 50S ribosomal subunit. The chain is Ribosomal RNA large subunit methyltransferase E from Desulfosudis oleivorans (strain DSM 6200 / JCM 39069 / Hxd3) (Desulfococcus oleovorans).